A 390-amino-acid chain; its full sequence is UPF0229 protein OB2647 (390 aa).

The disordered stretch occupies residues 99-121 (NASQQGQQGQGNGKKAGDQPGTD).

The protein belongs to the UPF0229 family.

This is UPF0229 protein OB2647 from Oceanobacillus iheyensis (strain DSM 14371 / CIP 107618 / JCM 11309 / KCTC 3954 / HTE831).